The chain runs to 358 residues: DNA replication and repair protein RecF (358 aa).

Residue 30–37 (GNNGSGKT) coordinates ATP.

Belongs to the RecF family.

The protein localises to the cytoplasm. Functionally, the RecF protein is involved in DNA metabolism; it is required for DNA replication and normal SOS inducibility. RecF binds preferentially to single-stranded, linear DNA. It also seems to bind ATP. In Histophilus somni (strain 129Pt) (Haemophilus somnus), this protein is DNA replication and repair protein RecF.